Reading from the N-terminus, the 563-residue chain is F-box/kelch-repeat protein At5g42350 (563 aa).

One can recognise an F-box domain in the interval 129–175; the sequence is YRKHVYLPDDILEMCLMRLPLTSLLNAHLVCKKWQSMANTQRFLQMR. 3 Kelch repeats span residues 184-231, 232-282, and 355-402; these read WLFL…SIHE, EIYI…ATEV, and VLIA…IICN.

This Arabidopsis thaliana (Mouse-ear cress) protein is F-box/kelch-repeat protein At5g42350.